A 576-amino-acid chain; its full sequence is uncharacterized protein (576 aa).

The Cytoplasmic portion of the chain corresponds to 1-8; it reads MSLSLGAA. A helical membrane pass occupies residues 9–29; the sequence is IYIALKPIFKIYTIMLVGYLV. At 30 to 45 the chain is on the extracellular side; it reads AKFDIVSMENAKGISN. A helical transmembrane segment spans residues 46–66; sequence MVVNAILPCLTFNKIVSNISW. The Cytoplasmic segment spans residues 67–71; that stretch reads RDIKE. Residues 72-92 form a helical membrane-spanning segment; the sequence is IGVIILSAFILFVLGATGALF. The Extracellular portion of the chain corresponds to 93 to 103; the sequence is TTFATTVPKKF. The helical transmembrane segment at 104 to 124 threads the bilayer; the sequence is FWGLIFAGFFPNISDLPIAYI. The Cytoplasmic portion of the chain corresponds to 125-141; it reads QSMGNGSIFTAEEADKG. Residues 142–162 form a helical membrane-spanning segment; sequence VAYSCIFLFIQSFLMMNFGMW. Residues 163 to 400 lie on the Extracellular side of the membrane; it reads RVVGLDFRDT…FIINCLRPAS (238 aa). Residues 401 to 421 traverse the membrane as a helical segment; the sequence is LGAILGIICALIPWVKACFVT. At 422 to 437 the chain is on the cytoplasmic side; the sequence is TYVHVHKAPDGEPVLN. The chain crosses the membrane as a helical span at residues 438 to 458; sequence FLMDFTEYIGNACVPLGLLLL. Topologically, residues 459–476 are extracellular; sequence GGTLARLEIKSLPPGFIK. Residues 477-497 traverse the membrane as a helical segment; the sequence is SALLMTCFRLIVIPIIGVLWV. The Cytoplasmic segment spans residues 498–512; that stretch reads NKLYSIDWLDTGIGK. The helical transmembrane segment at 513–533 threads the bilayer; that stretch reads FDMILTWSMPSATAQVYFTAF. At 534–545 the chain is on the extracellular side; that stretch reads YTPACGDHIQMN. Residues 546–566 form a helical membrane-spanning segment; sequence CLSVLFVMQYAILFITVAFVV. Residues 567–576 are Cytoplasmic-facing; sequence TYTLKVDLKV.

Belongs to the auxin efflux carrier (TC 2.A.69) family.

Its subcellular location is the membrane. This is an uncharacterized protein from Saccharomyces cerevisiae (strain ATCC 204508 / S288c) (Baker's yeast).